Here is a 299-residue protein sequence, read N- to C-terminus: Probable lipid kinase YegS (299 aa).

The 132-residue stretch at 2-133 (AEFPASLLIL…IDMAQVNKQT (132 aa)) folds into the DAGKc domain. ATP-binding positions include Thr40, 66–72 (GDGTINE), and Thr95. Leu215, Asp218, and Leu220 together coordinate Mg(2+). The active-site Proton acceptor is Glu271.

It belongs to the diacylglycerol/lipid kinase family. YegS lipid kinase subfamily. Mg(2+) serves as cofactor. It depends on Ca(2+) as a cofactor.

The protein localises to the cytoplasm. Probably phosphorylates lipids; the in vivo substrate is unknown. The polypeptide is Probable lipid kinase YegS (Escherichia coli O127:H6 (strain E2348/69 / EPEC)).